The primary structure comprises 199 residues: Large ribosomal subunit protein bL25 (199 aa).

The protein belongs to the bacterial ribosomal protein bL25 family. CTC subfamily. As to quaternary structure, part of the 50S ribosomal subunit; part of the 5S rRNA/L5/L18/L25 subcomplex. Contacts the 5S rRNA. Binds to the 5S rRNA independently of L5 and L18.

Functionally, this is one of the proteins that binds to the 5S RNA in the ribosome where it forms part of the central protuberance. The polypeptide is Large ribosomal subunit protein bL25 (Chloroherpeton thalassium (strain ATCC 35110 / GB-78)).